The chain runs to 184 residues: Elongation factor P (184 aa).

It belongs to the elongation factor P family.

It localises to the cytoplasm. Its pathway is protein biosynthesis; polypeptide chain elongation. In terms of biological role, involved in peptide bond synthesis. Stimulates efficient translation and peptide-bond synthesis on native or reconstituted 70S ribosomes in vitro. Probably functions indirectly by altering the affinity of the ribosome for aminoacyl-tRNA, thus increasing their reactivity as acceptors for peptidyl transferase. This chain is Elongation factor P, found in Polaromonas sp. (strain JS666 / ATCC BAA-500).